A 318-amino-acid polypeptide reads, in one-letter code: uncharacterized protein (318 aa).

Belongs to the NAD(P)-dependent epimerase/dehydratase family.

This is an uncharacterized protein from Staphylococcus haemolyticus (strain JCSC1435).